We begin with the raw amino-acid sequence, 516 residues long: 2-isopropylmalate synthase (516 aa).

The region spanning 10–271 (IRIFDTTLRD…TTGIDTRELA (262 aa)) is the Pyruvate carboxyltransferase domain. Mn(2+) contacts are provided by Asp19, His205, His207, and Asn241. Residues 396-516 (ELVSFRVEAG…REKASNRETP (121 aa)) are regulatory domain.

Belongs to the alpha-IPM synthase/homocitrate synthase family. LeuA type 1 subfamily. Homodimer. Mn(2+) is required as a cofactor.

It is found in the cytoplasm. It carries out the reaction 3-methyl-2-oxobutanoate + acetyl-CoA + H2O = (2S)-2-isopropylmalate + CoA + H(+). It participates in amino-acid biosynthesis; L-leucine biosynthesis; L-leucine from 3-methyl-2-oxobutanoate: step 1/4. Functionally, catalyzes the condensation of the acetyl group of acetyl-CoA with 3-methyl-2-oxobutanoate (2-ketoisovalerate) to form 3-carboxy-3-hydroxy-4-methylpentanoate (2-isopropylmalate). This Acidimicrobium ferrooxidans (strain DSM 10331 / JCM 15462 / NBRC 103882 / ICP) protein is 2-isopropylmalate synthase.